A 406-amino-acid polypeptide reads, in one-letter code: Probable sphingosine-1-phosphate phosphatase (406 aa).

2 consecutive transmembrane segments (helical) span residues 66-86 (ILGE…CVAT) and 92-112 (LCVV…TFTL). Residues 107-115 (KNTFTLPRP) are phosphatase sequence motif I. Residues 133–136 (PSTH) are phosphatase sequence motif II. Residue histidine 136 is the Proton donor of the active site. The next 2 membrane-spanning stretches (helical) occupy residues 138–158 (ASAF…FPTI) and 162–182 (FNIS…SVMF). Residues 183–194 (SRLYNGHHTPMD) are phosphatase sequence motif III. The active-site Nucleophile is histidine 190. The next 5 helical transmembrane spans lie at 193-213 (MDVI…TYQL), 225-245 (TFLF…FFHP), 254-274 (AYPE…SLWL), 313-333 (ILIG…FFFF), and 374-394 (LFVY…FYYL).

The protein belongs to the type 2 lipid phosphate phosphatase family.

Its subcellular location is the endoplasmic reticulum membrane. In terms of biological role, has enzymatic activity against both sphingosine 1 phosphate (S1P) and dihydro-S1P. Regulates intracellular and extracellular S1P levels. This Dictyostelium discoideum (Social amoeba) protein is Probable sphingosine-1-phosphate phosphatase (sppA).